Reading from the N-terminus, the 677-residue chain is Sulfate transporter 2.2 (677 aa).

Residues 1–110 lie on the Cytoplasmic side of the membrane; it reads MQLSSLSHTS…QYKLNLFKKD (110 aa). Residues 111–131 traverse the membrane as a helical segment; sequence LMAGLTLASLCIPQSIGYANL. At 132–133 the chain is on the extracellular side; it reads AG. The helical transmembrane segment at 134–154 threads the bilayer; it reads LDPEYGLYTSVVPPLIYSTMG. Residues 155–158 lie on the Cytoplasmic side of the membrane; sequence TSRE. The helical transmembrane segment at 159–179 threads the bilayer; it reads LAIGPVAVVSLLLSSMVRDLQ. The Extracellular portion of the chain corresponds to 180–190; the sequence is DPVTDPIAYRK. Residues 191–211 traverse the membrane as a helical segment; the sequence is IVFTVTFFAGAFQAIFGLFRL. The Cytoplasmic segment spans residues 212–213; that stretch reads GF. A helical transmembrane segment spans residues 214-234; it reads LVDFLSHAALVGFMAGAAIVI. At 235 to 270 the chain is on the extracellular side; that stretch reads GLQQLKGLFGLTHFTNKTDVVSVLSSVFHSLHHPWQ. N-linked (GlcNAc...) asparagine glycosylation is present at Asn250. The helical transmembrane segment at 271–291 threads the bilayer; the sequence is PLNFVIGSSFLIFILLARFIG. Residues 292 to 296 lie on the Cytoplasmic side of the membrane; that stretch reads KRNNK. Residues 297–317 form a helical membrane-spanning segment; sequence LFWIPAMAPLISVVLATLIVY. The Extracellular portion of the chain corresponds to 318-352; the sequence is LSNAESRGVKIVKHIKPGFNQLSVNQLQFKSPHLG. The helical transmembrane segment at 353 to 373 threads the bilayer; that stretch reads QIAKIGLISAIIALTEAIAVG. Topologically, residues 374-389 are cytoplasmic; the sequence is RSFATIKGYRLDGNKE. Residues 390 to 410 traverse the membrane as a helical segment; sequence MMAMGFMNIAGSLSSCYVATG. Residues 411 to 422 lie on the Extracellular side of the membrane; it reads SFSRTAVNFSAG. A glycan (N-linked (GlcNAc...) asparagine) is linked at Asn418. A helical transmembrane segment spans residues 423-443; the sequence is CETVVSNIVMAITVMISLEVL. At 444 to 446 the chain is on the cytoplasmic side; sequence TRF. A helical transmembrane segment spans residues 447 to 467; sequence LYFTPTAILASIILSALPGLI. At 468 to 482 the chain is on the extracellular side; that stretch reads DVSGALHIWKLDKLD. The chain crosses the membrane as a helical span at residues 483–503; the sequence is FLVLIAAFFGVLFASVEIGLL. The Cytoplasmic segment spans residues 504–677; that stretch reads LAVGISFARI…RARSTSHELC (174 aa). The region spanning 540–666 is the STAS domain; the sequence is YPMANKTAGL…MTVGEAVDIY (127 aa).

The protein belongs to the SLC26A/SulP transporter (TC 2.A.53) family. As to expression, expressed in the phloem in roots and in the phloem of vascular bundles in leaves.

Its subcellular location is the membrane. Its function is as follows. Low-affinity H(+)/sulfate cotransporter that may be involved in the distribution of sulfate from vascular bundles to the palisade cells of the leaves. Plays a central role in the regulation of sulfate assimilation. This Arabidopsis thaliana (Mouse-ear cress) protein is Sulfate transporter 2.2 (SULTR2;2).